A 114-amino-acid chain; its full sequence is Large ribosomal subunit protein uL22 (114 aa).

Belongs to the universal ribosomal protein uL22 family. Part of the 50S ribosomal subunit.

This protein binds specifically to 23S rRNA; its binding is stimulated by other ribosomal proteins, e.g. L4, L17, and L20. It is important during the early stages of 50S assembly. It makes multiple contacts with different domains of the 23S rRNA in the assembled 50S subunit and ribosome. In terms of biological role, the globular domain of the protein is located near the polypeptide exit tunnel on the outside of the subunit, while an extended beta-hairpin is found that lines the wall of the exit tunnel in the center of the 70S ribosome. This Streptococcus sanguinis (strain SK36) protein is Large ribosomal subunit protein uL22.